We begin with the raw amino-acid sequence, 249 residues long: 5'-nucleotidase SurE (249 aa).

4 residues coordinate a divalent metal cation: Asp-9, Asp-10, Ser-40, and Asn-92.

Belongs to the SurE nucleotidase family. It depends on a divalent metal cation as a cofactor.

The protein localises to the cytoplasm. It carries out the reaction a ribonucleoside 5'-phosphate + H2O = a ribonucleoside + phosphate. Nucleotidase that shows phosphatase activity on nucleoside 5'-monophosphates. The chain is 5'-nucleotidase SurE from Shewanella frigidimarina (strain NCIMB 400).